Here is a 207-residue protein sequence, read N- to C-terminus: Guanylate kinase (207 aa).

The Guanylate kinase-like domain maps to 5-184 (GNLFIVSAPS…ALADLSAIIR (180 aa)). 12–19 (APSGAGKS) contributes to the ATP binding site. The disordered stretch occupies residues 30 to 49 (PSDKQVSVSHTTRKPRPGEV).

The protein belongs to the guanylate kinase family.

It localises to the cytoplasm. The enzyme catalyses GMP + ATP = GDP + ADP. Functionally, essential for recycling GMP and indirectly, cGMP. The sequence is that of Guanylate kinase from Shewanella frigidimarina (strain NCIMB 400).